A 261-amino-acid chain; its full sequence is Lysoplasmalogenase (261 aa).

8 helical membrane-spanning segments follow: residues Gly-29–Leu-49, Pro-65–Gly-85, Trp-90–Ile-107, Thr-111–Leu-133, Val-146–His-166, Leu-172–Leu-192, Thr-197–Gly-217, and Ala-227–Phe-247.

The protein belongs to the TMEM86 family.

The protein localises to the cell membrane. It carries out the reaction a 1-O-(1Z-alkenyl)-sn-glycero-3-phosphocholine + H2O = a 2,3-saturated aldehyde + sn-glycerol 3-phosphocholine. The catalysed reaction is a 1-O-(1Z-alkenyl)-sn-glycero-3-phosphoethanolamine + H2O = a 2,3-saturated aldehyde + sn-glycero-3-phosphoethanolamine. Functionally, specifically hydrolyzes the vinyl ether bond of lysoplasmenylcholine (pLPC) and lysoplasmenylethanolamine (pLPE) to release a fatty aldehyde and glycerophospho-choline or glycerophospho-ethanolamine. This Mycobacterium bovis (strain ATCC BAA-935 / AF2122/97) protein is Lysoplasmalogenase.